The following is a 131-amino-acid chain: MSEKIGILAIGHGSRLPYNKEVVSEIAATIAKKHPDYVIKAGFMENTLPTVMEALADFDGTGVTKIIAVPVFLASGVHITEDIPEILKLDPETNEGKITVDGNEIPVTFGKPLGHHELLADLVFERAMEVM.

The active-site Proton acceptor is the H12. Co(2+) is bound by residues H12 and H78. 2 residues coordinate Ni(2+): H12 and H78. 73-78 (LASGVH) contacts substrate.

It belongs to the CbiX family. CbiXS subfamily. As to quaternary structure, homotetramer; dimer of dimers.

The catalysed reaction is Co-sirohydrochlorin + 2 H(+) = sirohydrochlorin + Co(2+). It catalyses the reaction Ni-sirohydrochlorin + 2 H(+) = sirohydrochlorin + Ni(2+). Its pathway is cofactor biosynthesis; adenosylcobalamin biosynthesis; cob(II)yrinate a,c-diamide from sirohydrochlorin (anaerobic route): step 1/10. Its function is as follows. Catalyzes the insertion of Co(2+) into sirohydrochlorin as part of the anaerobic pathway to cobalamin biosynthesis. Involved in the biosynthesis of the unique nickel-containing tetrapyrrole coenzyme F430, the prosthetic group of methyl-coenzyme M reductase (MCR), which plays a key role in methanogenesis and anaerobic methane oxidation. Catalyzes the insertion of Ni(2+) into sirohydrochlorin to yield Ni-sirohydrochlorin. The chain is Sirohydrochlorin cobaltochelatase from Methanococcoides burtonii (strain DSM 6242 / NBRC 107633 / OCM 468 / ACE-M).